The sequence spans 400 residues: MGKANKVVLAYSGGVDTSVCIPYLKEEYGVEHVIAFAADLGQGDELDEIKKKAISAGASQSLIGNLVKPFIEDFAFPAIRSNALYQGRYPLSTALARPLIAKKLVEIARELNADGVAHGCTGKGNDQVRFDVTIGALAPDLQLLTPAREWGMSREETIAYGEKYGIVPPVSKKNPYSIDLNLLGRSIEAGPLEDPFQMPSEEVFGITSSIADSPNEPEIADILFENGYPVAINGEEMEPVSLIKKANSLAGKHGFGRLDIIEDRVVGIKSREIYETPGLLLLIKAHQEIESLTLPADLLDTKSRLERQWADLVYKGFWFSPLKEALDGFINYSQKQVNGTVRVRLFKGNVDVIGRKSKENSLYISDMSTYGSEDKFNHKSAEGFIYVWGLPSRIWSWINK.

ATP contacts are provided by residues 10–18 and A38; that span reads AYSGGVDTS. L-citrulline is bound at residue Y89. G119 is an ATP binding site. Residues T121, N125, and D126 each coordinate L-aspartate. An L-citrulline-binding site is contributed by N125. Residues R129, S177, S186, E262, and Y274 each coordinate L-citrulline.

This sequence belongs to the argininosuccinate synthase family. Type 1 subfamily. Homotetramer.

It is found in the cytoplasm. It catalyses the reaction L-citrulline + L-aspartate + ATP = 2-(N(omega)-L-arginino)succinate + AMP + diphosphate + H(+). Its pathway is amino-acid biosynthesis; L-arginine biosynthesis; L-arginine from L-ornithine and carbamoyl phosphate: step 2/3. In Prochlorococcus marinus (strain NATL2A), this protein is Argininosuccinate synthase.